We begin with the raw amino-acid sequence, 353 residues long: CCN family member 3 (353 aa).

Positions 1–26 (MEPGGGHSLPVLLLLLLLLLLRPSEV) are cleaved as a signal peptide. The IGFBP N-terminal domain maps to 29–103 (REAPCPRPCG…GGGTGICMVL (75 aa)). Cystine bridges form between Cys33/Cys59, Cys37/Cys61, Cys41/Cys62, Cys48/Cys65, Cys73/Cys87, and Cys79/Cys100. Residues 106-172 (DNCVFDGMIY…GECCEKWVCE (67 aa)) enclose the VWFC domain. A TSP type-1 domain is found at 203 to 248 (NCIEQTTEWSACSRSCGMGFSTRVTNRNQQCEMVKQTRLCMMRPCE). Intrachain disulfides connect Cys260–Cys297, Cys277–Cys311, Cys288–Cys327, Cys291–Cys329, and Cys296–Cys333. The CTCK domain maps to 260–334 (CIRTKKSMKA…NTCVCHGNCP (75 aa)). N-linked (GlcNAc...) asparagine glycosylation is present at Asn276.

Belongs to the CCN family.

It is found in the secreted. The protein localises to the cytoplasm. It localises to the cell junction. Its subcellular location is the gap junction. Immediate-early protein likely to play a role in cell growth regulation. The sequence is that of CCN family member 3 (CCN3) from Coturnix japonica (Japanese quail).